Consider the following 265-residue polypeptide: Small ribosomal subunit protein uS2 (265 aa).

It belongs to the universal ribosomal protein uS2 family.

This chain is Small ribosomal subunit protein uS2, found in Gluconobacter oxydans (strain 621H) (Gluconobacter suboxydans).